A 244-amino-acid chain; its full sequence is Phosphoadenosine 5'-phosphosulfate reductase (244 aa).

The Nucleophile; cysteine thiosulfonate intermediate role is filled by cysteine 239.

The protein belongs to the PAPS reductase family. CysH subfamily.

The protein localises to the cytoplasm. It carries out the reaction [thioredoxin]-disulfide + sulfite + adenosine 3',5'-bisphosphate + 2 H(+) = [thioredoxin]-dithiol + 3'-phosphoadenylyl sulfate. It participates in sulfur metabolism; hydrogen sulfide biosynthesis; sulfite from sulfate: step 3/3. Functionally, catalyzes the formation of sulfite from phosphoadenosine 5'-phosphosulfate (PAPS) using thioredoxin as an electron donor. This is Phosphoadenosine 5'-phosphosulfate reductase from Shigella dysenteriae serotype 1 (strain Sd197).